We begin with the raw amino-acid sequence, 174 residues long: NADH-ubiquinone oxidoreductase chain 6 (174 aa).

The next 6 helical transmembrane spans lie at 1–21 (MTYV…GFSS), 24–44 (SPIY…TIIL), 47–67 (GGGY…MVVF), 86–106 (VEVL…VLWV), 111–131 (GVVV…EGEG), and 151–171 (WLVV…IEIA).

The protein belongs to the complex I subunit 6 family. Core subunit of respiratory chain NADH dehydrogenase (Complex I) which is composed of 45 different subunits.

The protein resides in the mitochondrion inner membrane. The catalysed reaction is a ubiquinone + NADH + 5 H(+)(in) = a ubiquinol + NAD(+) + 4 H(+)(out). Core subunit of the mitochondrial membrane respiratory chain NADH dehydrogenase (Complex I) which catalyzes electron transfer from NADH through the respiratory chain, using ubiquinone as an electron acceptor. Essential for the catalytic activity and assembly of complex I. The chain is NADH-ubiquinone oxidoreductase chain 6 (MT-ND6) from Pan paniscus (Pygmy chimpanzee).